The following is a 730-amino-acid chain: Sodium-dependent neutral amino acid transporter B(0)AT2 (730 aa).

The tract at residues 1–24 (MPKNSKVVKRELDDDVTESVKDLL) is disordered. Topologically, residues 1 to 70 (MPKNSKVVKR…RPAWSSKLQY (70 aa)) are extracellular. Phosphoserine is present on residues S25 and S55. 3 helical membrane passes run 71-91 (ILAQVGFSVGLGNVWRFPYLC), 97-117 (GAYLLPYLILLMVIGIPLFFL), and 149-169 (VVCYFVALYYNVIIGWSLFYF). Residues 170–223 (SQSFQQPLPWDQCPLVKNASHTFVEPECEQSSATTYYWYREALNISSSISESGG) are Cytoplasmic-facing. 2 consecutive transmembrane segments (helical) span residues 224–244 (LNWKMTICLLAAWVMVCLAMI) and 253–273 (IIYFSSLFPYVVLICFLIRAL). The N-linked (GlcNAc...) asparagine glycan is linked to N276. Transmembrane regions (helical) follow at residues 302–322 (AATQVFFALGLGFGGVIAFSS) and 335–355 (VLVSFINFFTSVLATLVVFAV). The Cytoplasmic segment spans residues 356–458 (LGFKANVINE…AMTHFPASPF (103 aa)). Helical transmembrane passes span 459 to 479 (WSVMFFLMLVNLGLGSMFGTI), 494 to 514 (KEILTVICCLLAFCIGLIFVQ), 530 to 550 (TLPLLIVVILENIAVCFVYGI), 575 to 595 (YVSPLMLLSLLIASVVNMGLS), and 619 to 639 (LVVCVSLVVFAVLPVPVVFIV). Residues 640–730 (RRFNLIDDSS…IMPDMPESDL (91 aa)) are Extracellular-facing. 3 positions are modified to phosphoserine: S687, S699, and S701.

The protein belongs to the sodium:neurotransmitter symporter (SNF) (TC 2.A.22) family. SLC6A15 subfamily.

It is found in the membrane. The catalysed reaction is L-leucine(in) + Na(+)(in) = L-leucine(out) + Na(+)(out). It catalyses the reaction L-isoleucine(in) + Na(+)(in) = L-isoleucine(out) + Na(+)(out). The enzyme catalyses L-methionine(in) + Na(+)(in) = L-methionine(out) + Na(+)(out). It carries out the reaction L-proline(in) + Na(+)(in) = L-proline(out) + Na(+)(out). The catalysed reaction is L-alanine(in) + Na(+)(in) = L-alanine(out) + Na(+)(out). It catalyses the reaction L-asparagine(in) + Na(+)(in) = L-asparagine(out) + Na(+)(out). The enzyme catalyses L-valine(in) + Na(+)(in) = L-valine(out) + Na(+)(out). It carries out the reaction L-cysteine(in) + Na(+)(in) = L-cysteine(out) + Na(+)(out). The catalysed reaction is L-glutamine(in) + Na(+)(in) = L-glutamine(out) + Na(+)(out). It catalyses the reaction L-serine(in) + Na(+)(in) = L-serine(out) + Na(+)(out). The enzyme catalyses L-threonine(in) + Na(+)(in) = L-threonine(out) + Na(+)(out). It carries out the reaction L-pipecolate(in) + Na(+)(in) = L-pipecolate(out) + Na(+)(out). The catalysed reaction is L-phenylalanine(in) + Na(+)(in) = L-phenylalanine(out) + Na(+)(out). Functions as a sodium-dependent neutral amino acid transporter. Exhibits preference for the branched-chain amino acids, particularly leucine, valine and isoleucine and methionine. Can also transport low-affinity substrates such as alanine, phenylalanine, glutamine and pipecolic acid. Mediates the saturable, pH-sensitive and electrogenic cotransport of proline and sodium ions with a stoichiometry of 1:1. May have a role as transporter for neurotransmitter precursors into neurons. In contrast to other members of the neurotransmitter transporter family, does not appear to be chloride-dependent. This Pongo abelii (Sumatran orangutan) protein is Sodium-dependent neutral amino acid transporter B(0)AT2 (SLC6A15).